A 431-amino-acid chain; its full sequence is Fibrinogen C domain-containing protein 1 (431 aa).

The Cytoplasmic segment spans residues 1-3 (MLC). Residues 4 to 24 (TVLLALAVLLAVAVTGAVLFL) form a helical; Signal-anchor for type II membrane protein membrane-spanning segment. Residues 25–431 (NHTHTPGTAP…MKIRPVREDR (407 aa)) lie on the Extracellular side of the membrane. Residues 205–428 (CATGSRPRDC…FSEMKIRPVR (224 aa)) enclose the Fibrinogen C-terminal domain. Cysteines 214 and 243 form a disulfide. Asparagine 310 carries an N-linked (GlcNAc...) asparagine glycan. Ca(2+)-binding residues include aspartate 363 and aspartate 365. The cysteines at positions 371 and 384 are disulfide-linked.

Homotetramer; disulfide-linked.

It localises to the membrane. In terms of biological role, acetyl group-binding receptor which shows a high-affinity and calcium-dependent binding to acetylated structures such as chitin, some N-acetylated carbohydrates, and amino acids, but not to their non-acetylated counterparts. Can facilitate the endocytosis of acetylated components. This chain is Fibrinogen C domain-containing protein 1 (FIBCD1), found in Macaca fascicularis (Crab-eating macaque).